The sequence spans 428 residues: Flotillin-2 (428 aa).

S-palmitoyl cysteine attachment occurs at residues cysteine 4, cysteine 19, and cysteine 20.

Belongs to the band 7/mec-2 family. Flotillin subfamily. Heterooligomeric complex of flotillins 1 and 2. In terms of processing, palmitoylation may be required for the formation of higher order complexes and for neurite outgrowth in cultured neural stem cells. Normally expressed in growing retinal exons of newly differentiated ganglion cells at the retinal margin. After optic nerve injury, expressed in all retinal ganglion cells and retinal axons. Also expressed in endothelial cells, spinal cord, larval and adult skin, muscle processes, thymus and gill macrophages.

Its subcellular location is the membrane. The protein localises to the endosome. May play a role in axon growth and regeneration. May be involved in epidermal cell adhesion and epidermal structure and function. This Carassius auratus (Goldfish) protein is Flotillin-2 (flot2).